The following is a 584-amino-acid chain: Endogenous retrovirus group FC1 Env polyprotein (584 aa).

A signal peptide spans Met1–Ser22. At Asn23 to Trp518 the chain is on the extracellular side. Residues Asn69 and Asn247 are each glycosylated (N-linked (GlcNAc...) asparagine). The CXXC signature appears at Cys251–Cys254. 8 N-linked (GlcNAc...) asparagine glycosylation sites follow: Asn272, Asn276, Asn308, Asn313, Asn322, Asn334, Asn342, and Asn346. The interval Ala384–Leu404 is fusion peptide. Positions Met449 to Thr465 match the CKS-17 motif. A disulfide bond links Cys466 and Cys473. Residues Cys466–Cys474 carry the CX6CC motif. N-linked (GlcNAc...) asparagine glycosylation is present at Asn478. The helical transmembrane segment at Ile519 to Val539 threads the bilayer. The Cytoplasmic portion of the chain corresponds to Leu540–Arg584.

The protein belongs to the gamma type-C retroviral envelope protein family. HERV class-I F(c)1 env subfamily. The surface (SU) and transmembrane (TM) proteins form a heterodimer. SU and TM are attached by noncovalent interactions or by a labile interchain disulfide bond. In terms of processing, specific enzymatic cleavages in vivo yield the mature SU and TM proteins. Post-translationally, the CXXC motif is highly conserved across a broad range of retroviral envelope proteins. It is thought to participate in the formation of a labile disulfide bond possibly with the CX6CC motif present in the transmembrane protein. As to expression, low expression in skin, testis and trachea.

The protein resides in the virion. The protein localises to the cell membrane. In terms of biological role, retroviral envelope proteins mediate receptor recognition and membrane fusion during early infection. Endogenous envelope proteins may have kept, lost or modified their original function during evolution. This endogenous envelope protein has lost its original fusogenic properties. Its function is as follows. SU mediates receptor recognition. Functionally, TM anchors the envelope heterodimer to the viral membrane through one transmembrane domain. The other hydrophobic domain, called fusion peptide, mediates fusion of the viral membrane with the target cell membrane. The sequence is that of Endogenous retrovirus group FC1 Env polyprotein (ERVFC1) from Homo sapiens (Human).